The primary structure comprises 288 residues: Protoheme IX farnesyltransferase (288 aa).

A run of 9 helical transmembrane segments spans residues 8-28 (IIKP…FLLA), 35-55 (VNLF…ASIF), 75-95 (IAIG…LLIL), 105-125 (FLTI…YSLL), 130-150 (SVYS…IGYC), 161-181 (FILL…IGLV), 205-225 (INII…FFAG), 230-250 (NYLF…IKGF), and 265-285 (IFLF…IDYK).

Belongs to the UbiA prenyltransferase family. Protoheme IX farnesyltransferase subfamily.

Its subcellular location is the cell membrane. The enzyme catalyses heme b + (2E,6E)-farnesyl diphosphate + H2O = Fe(II)-heme o + diphosphate. The protein operates within porphyrin-containing compound metabolism; heme O biosynthesis; heme O from protoheme: step 1/1. In terms of biological role, converts heme B (protoheme IX) to heme O by substitution of the vinyl group on carbon 2 of heme B porphyrin ring with a hydroxyethyl farnesyl side group. This is Protoheme IX farnesyltransferase from Wigglesworthia glossinidia brevipalpis.